Reading from the N-terminus, the 201-residue chain is Probable GTP-binding protein EngB (201 aa).

The EngB-type G domain occupies 22–197; that stretch reads RLPEYAFIGR…LDYIDSINQE (176 aa). Residues 30 to 37, 57 to 61, 75 to 78, 142 to 145, and 173 to 178 each bind GTP; these read GRSNVGKS, GKTQL, DLPG, TKAD, and VFITSS. Residues Ser-37 and Thr-59 each contribute to the Mg(2+) site.

This sequence belongs to the TRAFAC class TrmE-Era-EngA-EngB-Septin-like GTPase superfamily. EngB GTPase family. Mg(2+) serves as cofactor.

In terms of biological role, necessary for normal cell division and for the maintenance of normal septation. This Porphyromonas gingivalis (strain ATCC 33277 / DSM 20709 / CIP 103683 / JCM 12257 / NCTC 11834 / 2561) protein is Probable GTP-binding protein EngB.